We begin with the raw amino-acid sequence, 174 residues long: Transcriptional repressor NrdR (174 aa).

A zinc finger lies at 3–34 (CPFCQHSDTRVIDSRVSEDGTTIRRRRECEAC). The ATP-cone domain occupies 49–139 (PTVVKSDGGR…VYRSFQDVAD (91 aa)).

This sequence belongs to the NrdR family. Zn(2+) serves as cofactor.

Functionally, negatively regulates transcription of bacterial ribonucleotide reductase nrd genes and operons by binding to NrdR-boxes. This chain is Transcriptional repressor NrdR, found in Xanthomonas oryzae pv. oryzae (strain MAFF 311018).